The chain runs to 215 residues: MNDTLLTTYTLAEGLHWLDLIGVLAFAMSGALLGVRKRFDLFGVLVLGAVTAVGGGAIRDSLTGQTPPLFLRDETYLWTALLGALLAFAFGERLARFERTLSLFDSAGLALFATSGALGAIKIGLGPLGVVFAGMLSGVGGGIIRDLIANEVPEVMYRRDQLYATAAAAGAGAVWLLAPHFTPFQAQAGGALLVLFLRWVSRRQWVRLPVRRLPE.

Helical transmembrane passes span 15 to 35, 39 to 59, 75 to 95, 101 to 121, 123 to 143, and 162 to 182; these read LHWL…LLGV, FDLF…GAIR, TYLW…ERLA, LSLF…LGAI, IGLG…GGGI, and LYAT…PHFT.

The protein belongs to the UPF0126 family.

Its subcellular location is the cell membrane. This is UPF0126 membrane protein DR_2368 from Deinococcus radiodurans (strain ATCC 13939 / DSM 20539 / JCM 16871 / CCUG 27074 / LMG 4051 / NBRC 15346 / NCIMB 9279 / VKM B-1422 / R1).